The primary structure comprises 599 residues: Elongation factor 4 (599 aa).

Positions 4–186 constitute a tr-type G domain; sequence ENIRNFSIIA…EIVTKIPPPQ (183 aa). Residues 16–21 and 133–136 contribute to the GTP site; these read DHGKST and NKID.

This sequence belongs to the TRAFAC class translation factor GTPase superfamily. Classic translation factor GTPase family. LepA subfamily.

Its subcellular location is the cell inner membrane. It carries out the reaction GTP + H2O = GDP + phosphate + H(+). In terms of biological role, required for accurate and efficient protein synthesis under certain stress conditions. May act as a fidelity factor of the translation reaction, by catalyzing a one-codon backward translocation of tRNAs on improperly translocated ribosomes. Back-translocation proceeds from a post-translocation (POST) complex to a pre-translocation (PRE) complex, thus giving elongation factor G a second chance to translocate the tRNAs correctly. Binds to ribosomes in a GTP-dependent manner. This is Elongation factor 4 from Geotalea uraniireducens (strain Rf4) (Geobacter uraniireducens).